Consider the following 71-residue polypeptide: Antimicrobial peptide VpCT4 (71 aa).

The signal sequence occupies residues 1–23; the sequence is MKTQFVILIVAIVILQLISQSEA. Position 39 is a leucine amide (Leu-39). Positions 40–71 are excised as a propeptide; the sequence is GKRGVQNMDQFDDIFEPELSEADLRYLQDLLR.

This sequence belongs to the non-disulfide-bridged peptide (NDBP) superfamily. Short antimicrobial peptide (group 4) family. In terms of tissue distribution, expressed by the venom gland.

It localises to the secreted. The protein localises to the target cell membrane. In terms of biological role, antimicrobial peptide with potent activity against bacteria S.aureus (MIC=9.3 uM), weak activity against E.coli (MIC&gt;100 uM), and weak activity against pathogenic yeasts C.albicans (MIC=100 uM) and C.glabrata (MIC=100 uM). Is not very effective against P.aeruginosa (MIC&gt;300 uM). Also provokes high hemolysis on human erythrocytes (HC(50)=4.8 uM). The chain is Antimicrobial peptide VpCT4 from Mesomexovis punctatus (Scorpion).